Consider the following 184-residue polypeptide: Large ribosomal subunit protein eL14 (184 aa).

The disordered stretch occupies residues 149 to 184; the sequence is KNAKKVDSTPAAKKRIEKARAARKAKPTAAKEKSKK. The segment covering 160-174 has biased composition (basic residues); the sequence is AKKRIEKARAARKAK.

It belongs to the eukaryotic ribosomal protein eL14 family.

This chain is Large ribosomal subunit protein eL14, found in Trypanosoma congolense.